Consider the following 349-residue polypeptide: MLFAALRDVQWRKRRLVIAIVSTGLVFAMTLVLTGLVNGFRVEAERTVDSMGVDAFVVKAGAAGPFLGSTPFAQIDLPQVARAPGVLAAAPLATAPSTIRQGTSARNVTAFGAPEHGPGMPRVSDGRAPSTPDEVAVSSTLGRNLGDDLQVGARTLRIVGIVPESTALAKIPNIFLTTEGLQQLAYNGQPTISSIGIDGMPRQLPDGYQTVNRADAVSDLMRPLKVAVDAITVVAVLLWIVAALIVGSVVYLSALERLRDFAVFKAIGVPTRSILAGLALQAVVVALLAAVVGGILSLLLAPLFPMTVVVPLSAFVALPAIATVIGLLASVAGLRRVVAIDPALAFGGP.

The helical transmembrane segment at Val-17 to Val-37 threads the bilayer. A disordered region spans residues Phe-111–Thr-131. Helical transmembrane passes span Ala-230–Val-250, Val-284–Phe-304, and Val-308–Leu-328.

It belongs to the ABC-4 integral membrane protein family.

Its subcellular location is the cell membrane. This is an uncharacterized protein from Mycobacterium bovis (strain ATCC BAA-935 / AF2122/97).